A 336-amino-acid chain; its full sequence is NADH-quinone oxidoreductase subunit H (336 aa).

A run of 8 helical transmembrane segments spans residues 4 to 24 (YILWTALYVLLIVIPLILVVA), 75 to 95 (YLFFIAPILAFAPAYAAWAVI), 108 to 128 (LGLLYILAMTSFSVYGIVIAG), 154 to 174 (MGFAIVGVVIAAGSMGITGII), 181 to 201 (LWHWYFIPLFPLFVVYFIAGI), 233 to 253 (LFFLAEYANMILISILTSIMF), 272 to 292 (FVPGVVWLFAKTGIFMFMFLW), and 308 to 328 (LGWKIFIPLTFVWVVVVACMV).

The protein belongs to the complex I subunit 1 family. NDH-1 is composed of 14 different subunits. Subunits NuoA, H, J, K, L, M, N constitute the membrane sector of the complex.

It is found in the cell inner membrane. It catalyses the reaction a quinone + NADH + 5 H(+)(in) = a quinol + NAD(+) + 4 H(+)(out). Functionally, NDH-1 shuttles electrons from NADH, via FMN and iron-sulfur (Fe-S) centers, to quinones in the respiratory chain. The immediate electron acceptor for the enzyme in this species is believed to be ubiquinone. Couples the redox reaction to proton translocation (for every two electrons transferred, four hydrogen ions are translocated across the cytoplasmic membrane), and thus conserves the redox energy in a proton gradient. This subunit may bind ubiquinone. In Francisella philomiragia subsp. philomiragia (strain ATCC 25017 / CCUG 19701 / FSC 153 / O#319-036), this protein is NADH-quinone oxidoreductase subunit H.